The primary structure comprises 146 residues: Prepilin peptidase-dependent protein D (146 aa).

A propeptide spans 1–6 (leader sequence); that stretch reads MDKQRG. At Phe7 the chain carries N-methylphenylalanine. A helical membrane pass occupies residues 7–27; it reads FTLIELMVVIGIIAILSAIGI.

The protein belongs to the N-Me-Phe pilin family.

It is found in the fimbrium. The protein resides in the membrane. Its function is as follows. Major component of the type IV pilus (T4P) that plays a role in cell adhesion and motility. Not produced when grown under standard laboratory conditions. The polypeptide is Prepilin peptidase-dependent protein D (ppdD) (Escherichia coli (strain K12)).